A 275-amino-acid chain; its full sequence is 2,3,4,5-tetrahydropyridine-2,6-dicarboxylate N-succinyltransferase (275 aa).

Substrate-binding residues include Arg-106 and Asp-143.

The protein belongs to the transferase hexapeptide repeat family. As to quaternary structure, homotrimer.

Its subcellular location is the cytoplasm. It catalyses the reaction (S)-2,3,4,5-tetrahydrodipicolinate + succinyl-CoA + H2O = (S)-2-succinylamino-6-oxoheptanedioate + CoA. The protein operates within amino-acid biosynthesis; L-lysine biosynthesis via DAP pathway; LL-2,6-diaminopimelate from (S)-tetrahydrodipicolinate (succinylase route): step 1/3. The protein is 2,3,4,5-tetrahydropyridine-2,6-dicarboxylate N-succinyltransferase of Paraburkholderia xenovorans (strain LB400).